We begin with the raw amino-acid sequence, 363 residues long: Glycerol-3-phosphate dehydrogenase [NAD(+)], cytoplasmic (363 aa).

NAD(+)-binding positions include Gly11 to Gly16, Phe98, Lys121, and Ala155. Lys121 is a binding site for substrate. The Proton acceptor role is filled by Lys206. The NAD(+) site is built by Arg270 and Gln299. Residue Arg270–Asn271 participates in substrate binding.

It belongs to the NAD-dependent glycerol-3-phosphate dehydrogenase family. In terms of assembly, homodimer. As to expression, isoform GPDH-1 is predominant in thorax and isoform GPDH-3 in abdomen.

It localises to the cytoplasm. The catalysed reaction is sn-glycerol 3-phosphate + NAD(+) = dihydroxyacetone phosphate + NADH + H(+). It functions in the pathway phospholipid metabolism; alpha-glycerophosphate cycle. This is Glycerol-3-phosphate dehydrogenase [NAD(+)], cytoplasmic from Drosophila melanogaster (Fruit fly).